A 527-amino-acid chain; its full sequence is GMP synthase [glutamine-hydrolyzing] (527 aa).

The Glutamine amidotransferase type-1 domain maps to 19–212 (KIIVLDYGSQ…AFSICGAKGD (194 aa)). Residue C96 is the Nucleophile of the active site. Catalysis depends on residues H186 and E188. Positions 213-402 (WSMANFVDMQ…LGMPDEVVWR (190 aa)) constitute a GMPS ATP-PPase domain. Residue 240-246 (SGGVDSS) coordinates ATP.

In terms of assembly, homodimer.

The enzyme catalyses XMP + L-glutamine + ATP + H2O = GMP + L-glutamate + AMP + diphosphate + 2 H(+). The protein operates within purine metabolism; GMP biosynthesis; GMP from XMP (L-Gln route): step 1/1. Its function is as follows. Catalyzes the synthesis of GMP from XMP. The protein is GMP synthase [glutamine-hydrolyzing] of Streptococcus thermophilus (strain CNRZ 1066).